The chain runs to 278 residues: MEENMEEGQTQKGCFECCIKCLGGIPYASLIATILLYAGVALFCGCGHEALSGTVNILQTYFEMARTAGDTLDVFTMIDIFKYVIYGIAAAFFVYGILLMVEGFFTTGAIKDLYGDFKITTCGRCVSAWFIMLTYLFMLAWLGVTAFTSLPVYMYFNLWTICRNTTLVEGANLCLDLRQFGIVTIGEEKKICTVSENFLRMCESTELNMTFHLFIVALAGAGAAVIAMVHYLMVLSANWAYVKDACRMQKYEDIKSKEEQELHDIHSTRSKERLNAYT.

Methionine 1 carries the post-translational modification N-acetylmethionine. At 1–22 (MEENMEEGQTQKGCFECCIKCL) the chain is on the cytoplasmic side. Residues 23–43 (GGIPYASLIATILLYAGVALF) traverse the membrane as a helical segment. Residues 44–84 (CGCGHEALSGTVNILQTYFEMARTAGDTLDVFTMIDIFKYV) lie on the Extracellular side of the membrane. A helical membrane pass occupies residues 85 to 105 (IYGIAAAFFVYGILLMVEGFF). At 106 to 127 (TTGAIKDLYGDFKITTCGRCVS) the chain is on the cytoplasmic side. The helical transmembrane segment at 128–148 (AWFIMLTYLFMLAWLGVTAFT) threads the bilayer. Residues 149–213 (SLPVYMYFNL…STELNMTFHL (65 aa)) lie on the Extracellular side of the membrane. A glycan (N-linked (GlcNAc...) asparagine) is linked at asparagine 164. An intrachain disulfide couples cysteine 174 to cysteine 192. Asparagine 208 carries N-linked (GlcNAc...) asparagine glycosylation. Residues 214–234 (FIVALAGAGAAVIAMVHYLMV) form a helical membrane-spanning segment. The Cytoplasmic segment spans residues 235–278 (LSANWAYVKDACRMQKYEDIKSKEEQELHDIHSTRSKERLNAYT). Position 256 is a phosphoserine (serine 256). Position 278 is a phosphothreonine (threonine 278).

The protein belongs to the myelin proteolipid protein family. In terms of assembly, interacts with OPRM1. Interacts with palmitoyltransferase ZDHHC17/HIP14; the interaction leads to palmitoylation of GPM6A. Post-translationally, N-glycosylated. In terms of processing, palmitoylated by ZDHHC17/HIP14.

The protein resides in the cell membrane. It localises to the cell projection. It is found in the axon. The protein localises to the growth cone. Its subcellular location is the dendritic spine. The protein resides in the filopodium. It localises to the neuron projection. Functionally, involved in neuronal differentiation, including differentiation and migration of neuronal stem cells. Plays a role in neuronal plasticity and is involved in neurite and filopodia outgrowth, filopodia motility and probably synapse formation. GPM6A-induced filopodia formation involves mitogen-activated protein kinase (MAPK) and Src signaling pathways. May be involved in neuronal NGF-dependent Ca(2+) influx. May be involved in regulation of endocytosis and intracellular trafficking of G-protein-coupled receptors (GPCRs); may enhance internalization and recycling of mu-type opioid receptor. The polypeptide is Neuronal membrane glycoprotein M6-a (GPM6A) (Bos taurus (Bovine)).